Reading from the N-terminus, the 370-residue chain is Neutral protease 2 homolog AFUA_4G13750 (370 aa).

Residues 1–19 (MKVTILASAILALINGALA) form the signal peptide. Residues 20 to 172 (LPANTPTLDV…PQAIKLLDRR (153 aa)) constitute a propeptide that is removed on maturation. Disulfide bonds link Cys-178/Cys-250 and Cys-257/Cys-275. Zn(2+) is bound at residue His-300. The active site involves Glu-301. His-304 and Asp-315 together coordinate Zn(2+).

Belongs to the peptidase M35 family. It depends on Zn(2+) as a cofactor.

Its subcellular location is the secreted. It carries out the reaction Preferential cleavage of bonds with hydrophobic residues in P1'. Also 3-Asn-|-Gln-4 and 8-Gly-|-Ser-9 bonds in insulin B chain.. Its function is as follows. Secreted metalloproteinase that allows assimilation of proteinaceous substrates. Shows high activities on basic nuclear substrates such as histone and protamine. May be involved in virulence. The protein is Neutral protease 2 homolog AFUA_4G13750 of Aspergillus fumigatus (strain ATCC MYA-4609 / CBS 101355 / FGSC A1100 / Af293) (Neosartorya fumigata).